A 621-amino-acid chain; its full sequence is Alpha-actinin-like protein 1 (621 aa).

Calponin-homology (CH) domains follow at residues S8–T114 and L123–S230. The tract at residues L86–I110 is actin-binding. EF-hand domains follow at residues L388–L419, D487–M549, and E550–K618.

This sequence belongs to the alpha-actinin family.

The protein resides in the cytoplasm. Its subcellular location is the cytoskeleton. Its function is as follows. Binds to actin and is involved in actin-ring formation and organization. Plays a role in cytokinesis and is involved in septation. In Schizosaccharomyces pombe (strain 972 / ATCC 24843) (Fission yeast), this protein is Alpha-actinin-like protein 1 (ain1).